The chain runs to 855 residues: MKSERARRGAGGSGDLGAGFKYTSRPENMNGCEEGVEFLPANNSSKVEKGGPRRWVVLMAVLAAFLALSLLAGLLAWHFQDRNVRVQKIFNGYLSVRNENFLDAYENSNSTEFANLAKKVKEALKFLYSGIPVLGPYHKTSTVTAFSEGSVIAYYWSEFDIPKHLVKEAEQAMAEKRMVTVPPRARSMSSFVMTSVVAFPSDPRIIQNTQDNSCSFALHAQGSEPIRFSTPGFPDSPYPSHARCQWTLRGDADSVLSLTFRSFDVATCDERGSDLVTVYDTLSPVEPRAVVQLCGTYPPSYNLTFLSSQNVLLITLVTSTERRHPGFEAVFFQLPRMSSCGGYLRAAQGTFNSPYYPGHYPPNINCTWHIEVPDNKNVKVRFKAFFLQEPNVPVGSCTKDYVEINGEKYCGERPQFVASSRNNKITVHFHSDQSYTDTGFLAEFLSFDARDPCPGSFMCNTGRCIRKELRCDGWADCTDYSDELDCKCNATYQFTCRDKFCKPLFWVCDSVKDCEDGSDEEGCSCPPNTFKCGNGKCLPQSQQCDRKDDCGDGSDEAKCQDGKAVPCTEHTHRCLNGLCVDKSNPQCDGNEDCTDGSDEKDCDCGRRSFTRQSRVVGGENSDQGEWPWQVSLHAQGHGHLCGASLISPSWMISAAHCFVDDRGFRYSEHSVWTAFLGLHDQSKRNAPGVQERGLQRIIKHPFFNDFTFDYDIALLQLDRPVEYSATIRPICLPAADYTFPTGKAIWVTGWGHTQEAGQGAMILQKGEIRVINQTTCEHLLPQQITPRMICVGYLSGGVDACQGDSGGPLSSPEEDGRMFQAGVVSWGEGCAQRNKPGVYTRLPVFRDWIKAQIGV.

Residues 1–21 (MKSERARRGAGGSGDLGAGFK) are disordered. Topologically, residues 1–55 (MKSERARRGAGGSGDLGAGFKYTSRPENMNGCEEGVEFLPANNSSKVEKGGPRRW) are cytoplasmic. Ser-13 is subject to Phosphoserine. The chain crosses the membrane as a helical; Signal-anchor for type II membrane protein span at residues 56–76 (VVLMAVLAAFLALSLLAGLLA). Topologically, residues 77 to 855 (WHFQDRNVRV…RDWIKAQIGV (779 aa)) are extracellular. An SEA domain is found at 86 to 203 (VQKIFNGYLS…TSVVAFPSDP (118 aa)). The N-linked (GlcNAc...) asparagine glycan is linked to Asn-109. An intrachain disulfide couples Cys-214 to Cys-244. CUB domains lie at 214 to 334 (CSFA…FFQL) and 340 to 447 (CGGY…FLSF). Residues Asn-302 and Asn-365 are each glycosylated (N-linked (GlcNAc...) asparagine). Disulfide bonds link Cys-340–Cys-366, Cys-397–Cys-410, Cys-453–Cys-464, Cys-459–Cys-477, Cys-471–Cys-486, Cys-488–Cys-501, Cys-496–Cys-514, Cys-508–Cys-523, Cys-525–Cys-537, Cys-532–Cys-550, Cys-544–Cys-559, Cys-567–Cys-579, Cys-574–Cys-593, Cys-587–Cys-602, and Cys-641–Cys-657. 4 LDL-receptor class A domains span residues 452–487 (PCPG…LDCK), 487–524 (KCNA…EGCS), 524–560 (SCPP…AKCQ), and 566–603 (PCTE…KDCD). Asn-489 carries an N-linked (GlcNAc...) asparagine glycan. Residues 615 to 854 (VVGGENSDQG…FRDWIKAQIG (240 aa)) form the Peptidase S1 domain. Residues His-656 and Asp-711 each act as charge relay system in the active site. The N-linked (GlcNAc...) asparagine glycan is linked to Asn-772. Intrachain disulfides connect Cys-776–Cys-790 and Cys-801–Cys-830. Ser-805 (charge relay system) is an active-site residue.

This sequence belongs to the peptidase S1 family. In terms of assembly, interacts with CDCP1. May interact with TMEFF1.

It is found in the membrane. It carries out the reaction Cleaves various synthetic substrates with Arg or Lys at the P1 position and prefers small side-chain amino acids, such as Ala and Gly, at the P2 position.. In terms of biological role, exhibits trypsin-like activity as defined by cleavage of synthetic substrates with Arg or Lys as the P1 site. Involved in the terminal differentiation of keratinocytes through prostasin (PRSS8) activation and filaggrin (FLG) processing. Proteolytically cleaves and therefore activates TMPRSS13. This is Suppressor of tumorigenicity 14 protein homolog (ST14) from Bos taurus (Bovine).